The sequence spans 378 residues: tRNA-specific 2-thiouridylase MnmA (378 aa).

ATP contacts are provided by residues 27 to 34 and L53; that span reads AMSGGVDS. Catalysis depends on C121, which acts as the Nucleophile. C121 and C218 are joined by a disulfide. ATP is bound at residue G145. An interaction with tRNA region spans residues 168–170; it reads RDQ. Residue C218 is the Cysteine persulfide intermediate of the active site.

Belongs to the MnmA/TRMU family.

It localises to the cytoplasm. The enzyme catalyses S-sulfanyl-L-cysteinyl-[protein] + uridine(34) in tRNA + AH2 + ATP = 2-thiouridine(34) in tRNA + L-cysteinyl-[protein] + A + AMP + diphosphate + H(+). Catalyzes the 2-thiolation of uridine at the wobble position (U34) of tRNA, leading to the formation of s(2)U34. The sequence is that of tRNA-specific 2-thiouridylase MnmA from Rhizorhabdus wittichii (strain DSM 6014 / CCUG 31198 / JCM 15750 / NBRC 105917 / EY 4224 / RW1) (Sphingomonas wittichii).